A 357-amino-acid polypeptide reads, in one-letter code: tRNA-specific 2-thiouridylase MnmA (357 aa).

ATP-binding positions include 7–14 (GLSGGVDS) and Met-33. Residues 94–96 (NPD) form an interaction with target base in tRNA region. The active-site Nucleophile is Cys-99. A disulfide bridge connects residues Cys-99 and Cys-195. Gly-123 contacts ATP. Residues 145-147 (KDQ) form an interaction with tRNA region. Residue Cys-195 is the Cysteine persulfide intermediate of the active site. The interaction with tRNA stretch occupies residues 303–304 (RY).

Belongs to the MnmA/TRMU family.

It localises to the cytoplasm. It carries out the reaction S-sulfanyl-L-cysteinyl-[protein] + uridine(34) in tRNA + AH2 + ATP = 2-thiouridine(34) in tRNA + L-cysteinyl-[protein] + A + AMP + diphosphate + H(+). Its function is as follows. Catalyzes the 2-thiolation of uridine at the wobble position (U34) of tRNA, leading to the formation of s(2)U34. This Akkermansia muciniphila (strain ATCC BAA-835 / DSM 22959 / JCM 33894 / BCRC 81048 / CCUG 64013 / CIP 107961 / Muc) protein is tRNA-specific 2-thiouridylase MnmA.